Here is a 218-residue protein sequence, read N- to C-terminus: Pyridoxine/pyridoxamine 5'-phosphate oxidase (218 aa).

Substrate contacts are provided by residues 14–17 (RREY) and lysine 72. FMN is bound by residues 67 to 72 (RIVLLK), 82 to 83 (YT), arginine 88, lysine 89, and glutamine 111. Tyrosine 129, arginine 133, and serine 137 together coordinate substrate. FMN contacts are provided by residues 146–147 (QS) and tryptophan 191. 197 to 199 (RLH) contacts substrate. Arginine 201 serves as a coordination point for FMN.

This sequence belongs to the pyridoxamine 5'-phosphate oxidase family. As to quaternary structure, homodimer. Requires FMN as cofactor.

The enzyme catalyses pyridoxamine 5'-phosphate + O2 + H2O = pyridoxal 5'-phosphate + H2O2 + NH4(+). It catalyses the reaction pyridoxine 5'-phosphate + O2 = pyridoxal 5'-phosphate + H2O2. The protein operates within cofactor metabolism; pyridoxal 5'-phosphate salvage; pyridoxal 5'-phosphate from pyridoxamine 5'-phosphate: step 1/1. It participates in cofactor metabolism; pyridoxal 5'-phosphate salvage; pyridoxal 5'-phosphate from pyridoxine 5'-phosphate: step 1/1. Functionally, catalyzes the oxidation of either pyridoxine 5'-phosphate (PNP) or pyridoxamine 5'-phosphate (PMP) into pyridoxal 5'-phosphate (PLP). This Cronobacter sakazakii (strain ATCC BAA-894) (Enterobacter sakazakii) protein is Pyridoxine/pyridoxamine 5'-phosphate oxidase.